Here is a 244-residue protein sequence, read N- to C-terminus: tRNA (guanine-N(7)-)-methyltransferase (244 aa).

Polar residues predominate over residues 1–10; the sequence is MSDTPQSPAQ. Residues 1–20 form a disordered region; it reads MSDTPQSPAQGSLAEHDEAR. S-adenosyl-L-methionine contacts are provided by glutamate 74, glutamate 99, aspartate 126, and aspartate 149. Residue aspartate 149 is part of the active site. Substrate-binding positions include lysine 153, aspartate 185, and 222–225; that span reads TKFE.

Belongs to the class I-like SAM-binding methyltransferase superfamily. TrmB family.

The catalysed reaction is guanosine(46) in tRNA + S-adenosyl-L-methionine = N(7)-methylguanosine(46) in tRNA + S-adenosyl-L-homocysteine. Its pathway is tRNA modification; N(7)-methylguanine-tRNA biosynthesis. In terms of biological role, catalyzes the formation of N(7)-methylguanine at position 46 (m7G46) in tRNA. The protein is tRNA (guanine-N(7)-)-methyltransferase of Pseudomonas aeruginosa (strain UCBPP-PA14).